Consider the following 192-residue polypeptide: Signal peptidase complex catalytic subunit SEC11C (192 aa).

The Cytoplasmic portion of the chain corresponds to 2–28; the sequence is VRAGAVGTHLPASGLDIFGDLRKMNKR. A helical; Signal-anchor for type II membrane protein membrane pass occupies residues 29–48; the sequence is QLYYQVLNFAMIVSSALMIW. Residues 49–192 lie on the Lumenal side of the membrane; that stretch reads KGLIVLTGSE…GAYVLLKRES (144 aa). Active-site charge relay system residues include Ser-68, His-108, and Asp-134. Residues 177–188 form a C-terminal short (CTS) helix region; sequence ALLAVMGAYVLL.

Belongs to the peptidase S26B family. As to quaternary structure, component of the signal peptidase complex paralog C (SPC-C) composed of a catalytic subunit SEC11C and three accessory subunits SPCS1, SPCS2 and SPCS3. Within the complex, interacts with SPCS2 and SPCS3. The complex induces a local thinning of the ER membrane which is used to measure the length of the signal peptide (SP) h-region of protein substrates. This ensures the selectivity of the complex towards h-regions shorter than 18-20 amino acids. In terms of processing, may undergo processing at the N-terminus.

It localises to the endoplasmic reticulum membrane. It catalyses the reaction Cleavage of hydrophobic, N-terminal signal or leader sequences from secreted and periplasmic proteins.. In terms of biological role, catalytic component of the signal peptidase complex (SPC) which catalyzes the cleavage of N-terminal signal sequences from nascent proteins as they are translocated into the lumen of the endoplasmic reticulum. Specifically cleaves N-terminal signal peptides that contain a hydrophobic alpha-helix (h-region) shorter than 18-20 amino acids. The sequence is that of Signal peptidase complex catalytic subunit SEC11C (SEC11C) from Canis lupus familiaris (Dog).